Here is a 252-residue protein sequence, read N- to C-terminus: Type III pantothenate kinase (252 aa).

Position 6-13 (6-13) interacts with ATP; it reads DIGNTNTV. 105 to 108 is a binding site for substrate; it reads GADR. Catalysis depends on aspartate 107, which acts as the Proton acceptor. Aspartate 127 serves as a coordination point for K(+). Threonine 130 is a binding site for ATP. Position 182 (threonine 182) interacts with substrate.

This sequence belongs to the type III pantothenate kinase family. As to quaternary structure, homodimer. The cofactor is NH4(+). K(+) is required as a cofactor.

Its subcellular location is the cytoplasm. The enzyme catalyses (R)-pantothenate + ATP = (R)-4'-phosphopantothenate + ADP + H(+). The protein operates within cofactor biosynthesis; coenzyme A biosynthesis; CoA from (R)-pantothenate: step 1/5. Functionally, catalyzes the phosphorylation of pantothenate (Pan), the first step in CoA biosynthesis. The sequence is that of Type III pantothenate kinase from Salinispora arenicola (strain CNS-205).